Here is a 628-residue protein sequence, read N- to C-terminus: Chaperone protein HtpG (628 aa).

Positions 1–337 (MSEKKYTFET…SADLPLNVSR (337 aa)) are a; substrate-binding. A b region spans residues 338–554 (EILQHNKVID…DYGMSLHMQK (217 aa)). A c region spans residues 555 to 628 (MMEEAGQGFM…FVKLVNKYIR (74 aa)).

Belongs to the heat shock protein 90 family. Homodimer.

The protein localises to the cytoplasm. Molecular chaperone. Has ATPase activity. The protein is Chaperone protein HtpG of Francisella tularensis subsp. novicida (strain U112).